The following is a 27-amino-acid chain: Trypsin inhibitor 1 (27 aa).

As to quaternary structure, homodimer. Post-translationally, contains disulfide bonds. In terms of processing, glycosylated.

In terms of biological role, inhibits trypsin (IC(50)=1.25 uM) but not chymotrypsin or papain. Has antibacterial activity against S.enterica ATCC 10708 (MIC=5 ug/ml) and S.aureus ATCC 25923 (MIC=5 ug/ml) but not against B.subtilis ATCC 6633 or P.aeruginosa ATCC 25619. Has no hemolytic activity against human erythrocytes. Is not toxic to mice. This is Trypsin inhibitor 1 from Jatropha curcas (Barbados nut).